We begin with the raw amino-acid sequence, 537 residues long: Putative cysteine ligase BshC (537 aa).

The protein belongs to the BshC family.

Involved in bacillithiol (BSH) biosynthesis. May catalyze the last step of the pathway, the addition of cysteine to glucosamine malate (GlcN-Mal) to generate BSH. This Staphylococcus saprophyticus subsp. saprophyticus (strain ATCC 15305 / DSM 20229 / NCIMB 8711 / NCTC 7292 / S-41) protein is Putative cysteine ligase BshC.